We begin with the raw amino-acid sequence, 241 residues long: Uridylate kinase (241 aa).

15-18 (KLSG) is a binding site for ATP. Positions 23–28 (GTEGFG) are involved in allosteric activation by GTP. Gly57 is a UMP binding site. Residues Gly58 and Arg62 each contribute to the ATP site. UMP-binding positions include Asp77 and 138-145 (TGNPFFTT). Positions 165, 171, and 174 each coordinate ATP.

The protein belongs to the UMP kinase family. Homohexamer.

It is found in the cytoplasm. The enzyme catalyses UMP + ATP = UDP + ADP. The protein operates within pyrimidine metabolism; CTP biosynthesis via de novo pathway; UDP from UMP (UMPK route): step 1/1. With respect to regulation, allosterically activated by GTP. Inhibited by UTP. Functionally, catalyzes the reversible phosphorylation of UMP to UDP. In Salmonella choleraesuis (strain SC-B67), this protein is Uridylate kinase.